The following is a 471-amino-acid chain: MHHMPRTTGMNVAVVGGGISGLAVAHHLRSRGTDAVLLESSARLGGAVGTHALAGYLVEQGPNSFLDREPATRALAAALNLEGRIRAADPAAKRRYVYTRGRLRSVPASPPAFLASDILPLGARLRVAGELFSRRAPEGVDESLAAFGRRHLGHRATQVLLDAVQTGIYAGDVEQLSVAATFPMLVKMEREHRSLILGAIRAQKAQRQAALPAGTAPKLSGALSTFDGGLQVLIDALAASLGDAAHVGARVEGLAREDGGWRLIIEEHGRRAELSVAQVVLAAPAHATAKLLRPLDDALAALVAGIAYAPIAVVHLGFDAGTLPAPDGFGFLVPAEEQRRMLGAIHASTTFPFRAEGGRVLYSCMVGGARQPGLVEQDEDALAALAREELKALAGVTARPSFTRVFRWPLGIPQYNLGHLERVAAIDAALQRLPGLHLIGNAYKGVGLNDCIRNAAQLADALVAGNTSHAP.

FAD contacts are provided by residues G16–G21, E39–S40, A47, G61–S64, V251, W408, and V446–L448.

Belongs to the protoporphyrinogen/coproporphyrinogen oxidase family. Protoporphyrinogen oxidase subfamily. Monomer. Homodimer. FAD serves as cofactor.

The protein resides in the cytoplasm. It is found in the cell membrane. It catalyses the reaction protoporphyrinogen IX + 3 O2 = protoporphyrin IX + 3 H2O2. Its pathway is porphyrin-containing compound metabolism; protoporphyrin-IX biosynthesis; protoporphyrin-IX from protoporphyrinogen-IX: step 1/1. With respect to regulation, strongly inhibited by acifluorfen. Catalyzes the 6-electron oxidation of protoporphyrinogen-IX to form protoporphyrin-IX. Does not oxidize coproporphyrinogen III. Involved in the classical protoporphyrin-dependent (PPD) heme b biosynthesis. The chain is Protoporphyrinogen oxidase from Myxococcus xanthus.